We begin with the raw amino-acid sequence, 605 residues long: Probable potassium transport system protein Kup 3 (605 aa).

12 consecutive transmembrane segments (helical) span residues 16-36 (ALGLVFGDIGTSPIYTLTVIF), 49-69 (ILSLIFWTMTILVSAEYAWLA), 97-117 (VAFAGFLSFVGVSLLLGDAVI), 138-158 (GLSTGALVAIAAAIAIGLFSV), 170-190 (FGPIMALWFGTLAVTGAVSAF), 212-232 (GLAGYFVLSEVILCATGGEAL), 247-267 (AWHFVFVALYLNYLGQGVFAI), 287-307 (LYIPFLILTIMATIIASQAII), 339-359 (IYLGAVNWSLMVAVIFIMLVF), 368-388 (AYGMAVTGSMTITGIMMIIVF), 397-417 (ALVALVVTLIAAAYHVSTFSK), and 418-438 (LPHGAYWSIILASIPFVTIII).

It belongs to the HAK/KUP transporter (TC 2.A.72) family.

It is found in the cell inner membrane. The catalysed reaction is K(+)(in) + H(+)(in) = K(+)(out) + H(+)(out). Transport of potassium into the cell. Likely operates as a K(+):H(+) symporter. The sequence is that of Probable potassium transport system protein Kup 3 from Geobacter sulfurreducens (strain ATCC 51573 / DSM 12127 / PCA).